The primary structure comprises 160 residues: Surface-adhesin protein E (160 aa).

The signal sequence occupies residues 1-15; the sequence is MKKIILTLSLGLLTA. Residue C16 is the site of N-palmitoyl cysteine attachment. C16 carries the S-diacylglycerol cysteine lipid modification. The tract at residues 41-68 is interaction with laminin and plasminogen; sequence IRLVKNVNYYIDSESIWVDNQEPQIVHF. The interval 84 to 108 is interaction with vitronectin and epithelial cells; it reads PKRYARSVRQYKILNCANYHLTQVR.

As to quaternary structure, homodimer. Interacts with host vitronectin, laminin and plasminogen. Can interact with both immobilized and soluble vitronectin.

The protein resides in the cell outer membrane. The protein localises to the cell surface. In terms of biological role, acts as a multifunctional adhesin involved in direct interactions with host epithelial cells and host proteins, including vitronectin, laminin and plasminogen. In addition, interaction with serum vitronectin plays an important role in bacterial serum resistance, and conversion of plasminogen to plasmin at the cell surface aids in immune evasion and contributes to bacterial virulence. Induces a pro-inflammatory epithelial cell response, leading to interleukin-8 (IL-8) secretion and up-regulation of ICAM1. In Haemophilus influenzae (strain NTHi 3655), this protein is Surface-adhesin protein E (pe).